The chain runs to 97 residues: Putative defensin-like protein 227 (97 aa).

The signal sequence occupies residues 1-26 (MKWATLFMVSCVLMFFVMNNINEVES). 4 disulfides stabilise this stretch: cysteine 35–cysteine 97, cysteine 45–cysteine 76, cysteine 53–cysteine 91, and cysteine 74–cysteine 93.

The protein belongs to the DEFL family.

The protein resides in the secreted. In Arabidopsis thaliana (Mouse-ear cress), this protein is Putative defensin-like protein 227 (SCRL28).